The following is an 840-amino-acid chain: MTEEKKFSSSNRPARKQAVPERKELPASQRRHAAKLTDGTNSSAGTTPRSNKPARQGQSQGQGQNRHTNSSRSNTQGGNASRPNQSKSQGQGGRNNQRPGSRTQASEGRPMIREKKNWSTKPREGQIDYSKKTDNSLKQYVSENEKRKQAAAAKTTKKPAEQSKKAAEKPAQTKPKTAETKTTATTTQSGTGKFGGALASGNNSARNNSRKRNTNGTGQQTPRRNDKPRGSKKSRRIAAKKGPAVPATERKEQPLPAVLEYRIGMNVQDLSKLLHRDTAEIIKKLFLLGIVTNQNQSLDADTIEILAADYGIESQLKEEEDVADIDKFFEDDTIDESKLVARPPVVTIMGHVDHGKTTLLDYLRNSNVTEGEAGGITQHIGAYQTQLNGKTITFLDTPGHAAFTEMRARGANVTDLTILVVAADDGVMPQTIEAINHAKAAETPIIVAVNKIDKPGANPDEVMNQLMAYDLVPEEYGGDTIFVKISAKFGQNVDELLEMILLQAEVLELKANPDVPARGSVIEARLDKGRGPVATVLVQQGTMRVGDPIVVGNTYGRVRTMTNERGIELAEALPATPVQITGINEVPQAGDRFIVMADEKTARAAGEERAKRAQEAIRNSGSVVTLDTLFSTMSEKAMKTVPVIVKADVQGSVEALSGSLKKIEVDGVRVDIIHTAVGAINESDVTLASASGAIIIGFNVRSTPLAKSQADSDKVDIRFYNVIYNAIDDVEAAMKGQLEPVFEEKVIGNVTVKELFKFSKVGIIAGAMVEEGKITKDSKVRIMRDNVVVYDGEVASLQRGKDSVNEVKMGYEFGFTVAKYNDIRVGDTVEAYIMEEVKVK.

The interval 1–251 (MTEEKKFSSS…GPAVPATERK (251 aa)) is disordered. 2 stretches are compositionally biased toward polar residues: residues 38–50 (DGTN…TPRS) and 65–83 (NRHT…ASRP). Low complexity predominate over residues 84-102 (NQSKSQGQGGRNNQRPGSR). Composition is skewed to basic and acidic residues over residues 110 to 135 (PMIR…KTDN) and 158 to 168 (KPAEQSKKAAE). Positions 169–207 (KPAQTKPKTAETKTTATTTQSGTGKFGGALASGNNSARN) are enriched in low complexity. Residues 230–239 (GSKKSRRIAA) show a composition bias toward basic residues. The region spanning 341–510 (ARPPVVTIMG…LLQAEVLELK (170 aa)) is the tr-type G domain. Residues 350-357 (GHVDHGKT) are G1. Residue 350 to 357 (GHVDHGKT) coordinates GTP. The tract at residues 375-379 (GITQH) is G2. Residues 396–399 (DTPG) are G3. GTP-binding positions include 396–400 (DTPGH) and 450–453 (NKID). Positions 450 to 453 (NKID) are G4. Positions 486–488 (SAK) are G5.

It belongs to the TRAFAC class translation factor GTPase superfamily. Classic translation factor GTPase family. IF-2 subfamily.

The protein resides in the cytoplasm. In terms of biological role, one of the essential components for the initiation of protein synthesis. Protects formylmethionyl-tRNA from spontaneous hydrolysis and promotes its binding to the 30S ribosomal subunits. Also involved in the hydrolysis of GTP during the formation of the 70S ribosomal complex. In Leuconostoc citreum (strain KM20), this protein is Translation initiation factor IF-2.